The following is an 85-amino-acid chain: UPF0512 protein R (85 aa).

It belongs to the UPF0512 family.

The protein is UPF0512 protein R of Dictyostelium discoideum (Social amoeba).